The following is a 432-amino-acid chain: Adenylosuccinate synthetase (432 aa).

Residues 13–19 and 41–43 contribute to the GTP site; these read GDEGKGK and GHT. Catalysis depends on aspartate 14, which acts as the Proton acceptor. Aspartate 14 and glycine 41 together coordinate Mg(2+). IMP contacts are provided by residues 14–17, 39–42, threonine 130, arginine 144, glutamine 225, threonine 240, and arginine 304; these read DEGK and NAGH. Histidine 42 acts as the Proton donor in catalysis. 300–306 serves as a coordination point for substrate; the sequence is ATTGRRR. Residues arginine 306, 332–334, and 415–417 each bind GTP; these read KLD and STG.

It belongs to the adenylosuccinate synthetase family. Homodimer. It depends on Mg(2+) as a cofactor.

The protein localises to the cytoplasm. The enzyme catalyses IMP + L-aspartate + GTP = N(6)-(1,2-dicarboxyethyl)-AMP + GDP + phosphate + 2 H(+). It participates in purine metabolism; AMP biosynthesis via de novo pathway; AMP from IMP: step 1/2. Its function is as follows. Plays an important role in the de novo pathway of purine nucleotide biosynthesis. Catalyzes the first committed step in the biosynthesis of AMP from IMP. This Salmonella agona (strain SL483) protein is Adenylosuccinate synthetase.